The sequence spans 361 residues: Chorismate synthase (361 aa).

Residues Arg-48 and Arg-54 each contribute to the NADP(+) site. Residues 125–127 (RSS), 238–239 (NA), Gly-278, 293–297 (KPTSS), and Arg-319 each bind FMN.

It belongs to the chorismate synthase family. As to quaternary structure, homotetramer. The cofactor is FMNH2.

It catalyses the reaction 5-O-(1-carboxyvinyl)-3-phosphoshikimate = chorismate + phosphate. It participates in metabolic intermediate biosynthesis; chorismate biosynthesis; chorismate from D-erythrose 4-phosphate and phosphoenolpyruvate: step 7/7. Its function is as follows. Catalyzes the anti-1,4-elimination of the C-3 phosphate and the C-6 proR hydrogen from 5-enolpyruvylshikimate-3-phosphate (EPSP) to yield chorismate, which is the branch point compound that serves as the starting substrate for the three terminal pathways of aromatic amino acid biosynthesis. This reaction introduces a second double bond into the aromatic ring system. The polypeptide is Chorismate synthase (Escherichia coli O1:K1 / APEC).